A 343-amino-acid chain; its full sequence is MATLGHTFPFYAGPKPTFPMDTTLASIIMIFLTALATFIVILPGIRGKTRLFWLLRVVTSLFIGAAILAVNFSSEWSVGQVSTNTSYKAFSSEWISADIGLQVGLGGVNITLTGTPVQQLNETINYNEEFTWRLGENYAEEYAKALEKGLPDPVLYLAEKFTPRSPCGLYRQYRLAGHYTSAMLWVAFLCWLLANVMLSMPVLVYGGYMLLATGIFQLLALLFFSMATSLTSPCPLHLGASVLHTHHGPAFWITLTTGLLCVLLGLAMAVAHRMQPHRLKAFFNQSVDEDPMLEWSPEEGGLLSPRYRSMADSPKSQDIPLSEASSTKAYCKEAHPKDPDCAL.

Topologically, residues 1-24 are extracellular; that stretch reads MATLGHTFPFYAGPKPTFPMDTTL. Residues 25–45 traverse the membrane as a helical segment; the sequence is ASIIMIFLTALATFIVILPGI. The Cytoplasmic portion of the chain corresponds to 46 to 51; it reads RGKTRL. Residues 52-72 form a helical membrane-spanning segment; that stretch reads FWLLRVVTSLFIGAAILAVNF. Topologically, residues 73–183 are extracellular; the sequence is SSEWSVGQVS…RLAGHYTSAM (111 aa). N-linked (GlcNAc...) asparagine glycans are attached at residues N84, N109, and N121. A helical membrane pass occupies residues 184-204; the sequence is LWVAFLCWLLANVMLSMPVLV. The Cytoplasmic segment spans residues 205–206; the sequence is YG. Residues 207–227 form a helical membrane-spanning segment; that stretch reads GYMLLATGIFQLLALLFFSMA. Over 228–249 the chain is Extracellular; sequence TSLTSPCPLHLGASVLHTHHGP. A helical transmembrane segment spans residues 250 to 270; that stretch reads AFWITLTTGLLCVLLGLAMAV. Topologically, residues 271 to 343 are cytoplasmic; sequence AHRMQPHRLK…AHPKDPDCAL (73 aa). Residues 306 to 343 form a disordered region; that stretch reads RYRSMADSPKSQDIPLSEASSTKAYCKEAHPKDPDCAL. Over residues 330 to 343 the composition is skewed to basic and acidic residues; sequence YCKEAHPKDPDCAL.

Belongs to the DUOXA family. In terms of assembly, may interact with NUMB. In terms of tissue distribution, specifically expressed in thyroid gland. Also detected in esophagus.

It localises to the membrane. Its function is as follows. May be required for the maturation and the transport from the endoplasmic reticulum to the plasma membrane of functional DUOX1. The protein is Dual oxidase maturation factor 1 (DUOXA1) of Homo sapiens (Human).